The following is a 557-amino-acid chain: Formate--tetrahydrofolate ligase 2 (557 aa).

66–73 (TPAGEGKT) contributes to the ATP binding site.

This sequence belongs to the formate--tetrahydrofolate ligase family.

It carries out the reaction (6S)-5,6,7,8-tetrahydrofolate + formate + ATP = (6R)-10-formyltetrahydrofolate + ADP + phosphate. It participates in one-carbon metabolism; tetrahydrofolate interconversion. The protein is Formate--tetrahydrofolate ligase 2 of Streptococcus pyogenes serotype M4 (strain MGAS10750).